Here is a 326-residue protein sequence, read N- to C-terminus: Beta-ketoacyl-[acyl-carrier-protein] synthase III (326 aa).

Catalysis depends on residues Cys120 and His253. An ACP-binding region spans residues 254–258 (QANIR). Residue Asn283 is part of the active site.

It belongs to the thiolase-like superfamily. FabH family. As to quaternary structure, homodimer.

It is found in the cytoplasm. The catalysed reaction is malonyl-[ACP] + acetyl-CoA + H(+) = 3-oxobutanoyl-[ACP] + CO2 + CoA. Its pathway is lipid metabolism; fatty acid biosynthesis. Catalyzes the condensation reaction of fatty acid synthesis by the addition to an acyl acceptor of two carbons from malonyl-ACP. Catalyzes the first condensation reaction which initiates fatty acid synthesis and may therefore play a role in governing the total rate of fatty acid production. Possesses both acetoacetyl-ACP synthase and acetyl transacylase activities. Its substrate specificity determines the biosynthesis of branched-chain and/or straight-chain of fatty acids. This chain is Beta-ketoacyl-[acyl-carrier-protein] synthase III, found in Ralstonia pickettii (strain 12J).